Here is a 120-residue protein sequence, read N- to C-terminus: MSRLTLPKNARLLKRKQFVYVQRNGRCCRADQVTLRVVPSRHSNTSKVGITVSKKFGKAHQRNRFKRIVREAFRHVRPNLPGCQVVISPRGNSQPDFLKLSEELLQRIPEALPLASSSRC.

This sequence belongs to the RnpA family. Consists of a catalytic RNA component (M1 or rnpB) and a protein subunit.

It catalyses the reaction Endonucleolytic cleavage of RNA, removing 5'-extranucleotides from tRNA precursor.. Functionally, RNaseP catalyzes the removal of the 5'-leader sequence from pre-tRNA to produce the mature 5'-terminus. It can also cleave other RNA substrates such as 4.5S RNA. The protein component plays an auxiliary but essential role in vivo by binding to the 5'-leader sequence and broadening the substrate specificity of the ribozyme. The sequence is that of Ribonuclease P protein component from Chlamydia trachomatis serovar L2 (strain ATCC VR-902B / DSM 19102 / 434/Bu).